The chain runs to 374 residues: Peptide chain release factor 2 (374 aa).

Residue glutamine 248 is modified to N5-methylglutamine.

Belongs to the prokaryotic/mitochondrial release factor family. Methylated by PrmC. Methylation increases the termination efficiency of RF2.

The protein resides in the cytoplasm. In terms of biological role, peptide chain release factor 2 directs the termination of translation in response to the peptide chain termination codons UGA and UAA. This chain is Peptide chain release factor 2, found in Thermomicrobium roseum (strain ATCC 27502 / DSM 5159 / P-2).